A 133-amino-acid polypeptide reads, in one-letter code: Putative pre-16S rRNA nuclease (133 aa).

The protein belongs to the YqgF nuclease family.

It localises to the cytoplasm. In terms of biological role, could be a nuclease involved in processing of the 5'-end of pre-16S rRNA. This is Putative pre-16S rRNA nuclease from Dehalococcoides mccartyi (strain ATCC BAA-2266 / KCTC 15142 / 195) (Dehalococcoides ethenogenes (strain 195)).